The sequence spans 329 residues: Very long chain fatty acid elongase 7 (329 aa).

The next 7 membrane-spanning stretches (helical) occupy residues Tyr-26 to Val-46, Leu-66 to Ile-86, Gly-114 to Met-134, Val-146 to Gly-166, Phe-170 to Ala-190, Leu-205 to Phe-225, and Ile-233 to Phe-253.

The protein belongs to the ELO family.

Its subcellular location is the membrane. It carries out the reaction a very-long-chain acyl-CoA + malonyl-CoA + H(+) = a very-long-chain 3-oxoacyl-CoA + CO2 + CoA. Catalyzes the first and rate-limiting reaction of the four reactions that constitute the long-chain fatty acids elongation cycle. This endoplasmic reticulum-bound enzymatic process allows the addition of 2 carbons to the chain of long- and very long-chain fatty acids (VLCFAs) per cycle. The sequence is that of Very long chain fatty acid elongase 7 from Drosophila melanogaster (Fruit fly).